Consider the following 412-residue polypeptide: Na(+)-translocating NADH-quinone reductase subunit B (412 aa).

The next 3 membrane-spanning stretches (helical) occupy residues 57 to 77, 127 to 147, and 163 to 183; these read MILV…NVGL, VFFL…EVLF, and SILF…ALGI. Thr-236 is modified (FMN phosphoryl threonine). A run of 5 helical transmembrane segments spans residues 270–290, 297–317, 322–342, 358–378, and 381–401; these read GSIG…ILFG, IVAG…VIGS, MFSM…GMMF, WSYG…NPAY, and GMML…YLVV.

Belongs to the NqrB/RnfD family. Composed of six subunits; NqrA, NqrB, NqrC, NqrD, NqrE and NqrF. FMN serves as cofactor.

Its subcellular location is the cell inner membrane. The enzyme catalyses a ubiquinone + n Na(+)(in) + NADH + H(+) = a ubiquinol + n Na(+)(out) + NAD(+). Functionally, NQR complex catalyzes the reduction of ubiquinone-1 to ubiquinol by two successive reactions, coupled with the transport of Na(+) ions from the cytoplasm to the periplasm. NqrA to NqrE are probably involved in the second step, the conversion of ubisemiquinone to ubiquinol. The polypeptide is Na(+)-translocating NADH-quinone reductase subunit B (Klebsiella pneumoniae (strain 342)).